A 120-amino-acid polypeptide reads, in one-letter code: Phosphoribosyl-AMP cyclohydrolase (120 aa).

Asp-75 serves as a coordination point for Mg(2+). Position 76 (Cys-76) interacts with Zn(2+). Asp-77 and Asp-79 together coordinate Mg(2+). Zn(2+) is bound by residues Cys-92 and Cys-99.

This sequence belongs to the PRA-CH family. Homodimer. Requires Mg(2+) as cofactor. Zn(2+) serves as cofactor.

Its subcellular location is the cytoplasm. The enzyme catalyses 1-(5-phospho-beta-D-ribosyl)-5'-AMP + H2O = 1-(5-phospho-beta-D-ribosyl)-5-[(5-phospho-beta-D-ribosylamino)methylideneamino]imidazole-4-carboxamide. It functions in the pathway amino-acid biosynthesis; L-histidine biosynthesis; L-histidine from 5-phospho-alpha-D-ribose 1-diphosphate: step 3/9. Functionally, catalyzes the hydrolysis of the adenine ring of phosphoribosyl-AMP. The protein is Phosphoribosyl-AMP cyclohydrolase of Methanosarcina mazei (strain ATCC BAA-159 / DSM 3647 / Goe1 / Go1 / JCM 11833 / OCM 88) (Methanosarcina frisia).